The chain runs to 191 residues: Glycerol-3-phosphate acyltransferase (191 aa).

5 helical membrane-spanning segments follow: residues 5–25, 51–71, 78–98, 114–134, and 153–173; these read IILI…IAKI, LAVL…YTAQ, DLYI…PIWL, IALN…VFFI, and SFFF…LIFL.

Belongs to the PlsY family. In terms of assembly, probably interacts with PlsX.

The protein resides in the cell membrane. It catalyses the reaction an acyl phosphate + sn-glycerol 3-phosphate = a 1-acyl-sn-glycero-3-phosphate + phosphate. Its pathway is lipid metabolism; phospholipid metabolism. Functionally, catalyzes the transfer of an acyl group from acyl-phosphate (acyl-PO(4)) to glycerol-3-phosphate (G3P) to form lysophosphatidic acid (LPA). This enzyme utilizes acyl-phosphate as fatty acyl donor, but not acyl-CoA or acyl-ACP. The chain is Glycerol-3-phosphate acyltransferase from Wolbachia pipientis subsp. Culex pipiens (strain wPip).